Consider the following 173-residue polypeptide: Ribosome maturation factor RimM (173 aa).

The 74-residue stretch at glutamate 92 to isoleucine 165 folds into the PRC barrel domain.

Belongs to the RimM family. In terms of assembly, binds ribosomal protein uS19.

The protein resides in the cytoplasm. Its function is as follows. An accessory protein needed during the final step in the assembly of 30S ribosomal subunit, possibly for assembly of the head region. Essential for efficient processing of 16S rRNA. May be needed both before and after RbfA during the maturation of 16S rRNA. It has affinity for free ribosomal 30S subunits but not for 70S ribosomes. The protein is Ribosome maturation factor RimM of Bradyrhizobium diazoefficiens (strain JCM 10833 / BCRC 13528 / IAM 13628 / NBRC 14792 / USDA 110).